The following is a 629-amino-acid chain: Phosphoglucomutase, chloroplastic (629 aa).

Residues 1 to 69 (MSSTYARFDT…SSSSGPIIAG (69 aa)) constitute a chloroplast transit peptide. Residues Arg-94 and Ser-187 each contribute to the alpha-D-glucose 1,6-bisphosphate site. Catalysis depends on Ser-187, which acts as the Phosphoserine intermediate. Mg(2+)-binding residues include Ser-187, Asp-352, Asp-354, and Asp-356. Ser-187 bears the Phosphoserine mark. Alpha-D-glucose 1,6-bisphosphate contacts are provided by Asp-356, Arg-357, Thr-420, Glu-439, Ser-441, and Lys-452.

Belongs to the phosphohexose mutase family. As to quaternary structure, monomer. It depends on Mg(2+) as a cofactor.

It localises to the plastid. Its subcellular location is the chloroplast. The enzyme catalyses alpha-D-glucose 1-phosphate = alpha-D-glucose 6-phosphate. It carries out the reaction O-phospho-L-seryl-[protein] + alpha-D-glucose 1-phosphate = alpha-D-glucose 1,6-bisphosphate + L-seryl-[protein]. The catalysed reaction is alpha-D-glucose 1,6-bisphosphate + L-seryl-[protein] = O-phospho-L-seryl-[protein] + alpha-D-glucose 6-phosphate. Its activity is regulated as follows. Inhibited by the Calvin cycle intermediates fructose-1,6-bisphosphate and ribulose-1,5-bisphosphate. Functionally, catalyzes the reversible isomerization of alpha-D-glucose 1-phosphate to alpha-D-glucose 6-phosphate. The mechanism proceeds via the intermediate compound alpha-D-glucose 1,6-bisphosphate. This enzyme participates in both the breakdown and synthesis of glucose. This Brassica napus (Rape) protein is Phosphoglucomutase, chloroplastic (PGMP).